Here is a 359-residue protein sequence, read N- to C-terminus: tRNA N6-adenosine threonylcarbamoyltransferase (359 aa).

2 residues coordinate Fe cation: His-115 and His-119. Substrate contacts are provided by residues 137–141 (LVSGG), Asp-170, Gly-183, and Asn-283. Asp-311 is a binding site for Fe cation. A disordered region spans residues 328–359 (APDSLDIAPRSRWPLDEKSAPVFGTGRRGAKA).

This sequence belongs to the KAE1 / TsaD family. It depends on Fe(2+) as a cofactor.

It localises to the cytoplasm. The enzyme catalyses L-threonylcarbamoyladenylate + adenosine(37) in tRNA = N(6)-L-threonylcarbamoyladenosine(37) in tRNA + AMP + H(+). In terms of biological role, required for the formation of a threonylcarbamoyl group on adenosine at position 37 (t(6)A37) in tRNAs that read codons beginning with adenine. Is involved in the transfer of the threonylcarbamoyl moiety of threonylcarbamoyl-AMP (TC-AMP) to the N6 group of A37, together with TsaE and TsaB. TsaD likely plays a direct catalytic role in this reaction. This is tRNA N6-adenosine threonylcarbamoyltransferase from Brucella ovis (strain ATCC 25840 / 63/290 / NCTC 10512).